Reading from the N-terminus, the 415-residue chain is 3-oxoacyl-[acyl-carrier-protein] synthase 2 (415 aa).

In terms of domain architecture, Ketosynthase family 3 (KS3) spans 3–412 (KRRVVVTGMG…GTNGSLVFKK (410 aa)). Active-site for beta-ketoacyl synthase activity residues include cysteine 164, histidine 304, and histidine 342.

It belongs to the thiolase-like superfamily. Beta-ketoacyl-ACP synthases family. As to quaternary structure, homodimer.

It carries out the reaction a fatty acyl-[ACP] + malonyl-[ACP] + H(+) = a 3-oxoacyl-[ACP] + holo-[ACP] + CO2. It catalyses the reaction (9Z)-hexadecenoyl-[ACP] + malonyl-[ACP] + H(+) = 3-oxo-(11Z)-octadecenoyl-[ACP] + holo-[ACP] + CO2. It functions in the pathway lipid metabolism; fatty acid biosynthesis. Its function is as follows. Involved in the type II fatty acid elongation cycle. Catalyzes the elongation of a wide range of acyl-ACP by the addition of two carbons from malonyl-ACP to an acyl acceptor. Can efficiently catalyze the conversion of palmitoleoyl-ACP (cis-hexadec-9-enoyl-ACP) to cis-vaccenoyl-ACP (cis-octadec-11-enoyl-ACP), an essential step in the thermal regulation of fatty acid composition. The sequence is that of 3-oxoacyl-[acyl-carrier-protein] synthase 2 (fabF) from Vibrio harveyi (Beneckea harveyi).